A 203-amino-acid chain; its full sequence is Formate hydrogenlyase subunit 2 (203 aa).

4Fe-4S ferredoxin-type domains are found at residues 2 to 32 (NRFV…HGLQ), 42 to 72 (NEKE…TRVD), 73 to 102 (GAVQ…FSGS), and 137 to 169 (RAIA…LVDN). Positions 12, 15, 18, 22, 51, 54, 59, 63, 82, 85, 88, 92, 143, 146, 155, and 159 each coordinate [4Fe-4S] cluster.

FHL comprises of a formate dehydrogenase, unidentified electron carriers and a hydrogenase (isoenzyme 3). In this non-energy conserving pathway, molecular hydrogen and carbodioxide are released from formate. Requires [4Fe-4S] cluster as cofactor.

Functionally, probable electron transfer protein for hydrogenase 3. In Escherichia coli (strain K12), this protein is Formate hydrogenlyase subunit 2 (hycB).